The following is a 390-amino-acid chain: Serpin B4 (390 aa).

Position 1 is an N-acetylmethionine (M1).

Belongs to the serpin family. Ov-serpin subfamily. As to expression, squamous cells.

The protein localises to the cytoplasm. Functionally, may act as a protease inhibitor to modulate the host immune response against tumor cells. This Homo sapiens (Human) protein is Serpin B4 (SERPINB4).